Consider the following 442-residue polypeptide: D-serine dehydratase (442 aa).

Position 118 is an N6-(pyridoxal phosphate)lysine (Lys-118).

The protein belongs to the serine/threonine dehydratase family. DsdA subfamily. As to quaternary structure, monomer. Pyridoxal 5'-phosphate is required as a cofactor.

The catalysed reaction is D-serine = pyruvate + NH4(+). This Shigella sonnei (strain Ss046) protein is D-serine dehydratase.